The sequence spans 137 residues: uncharacterized protein (137 aa).

Helical transmembrane passes span 5-25, 79-99, and 109-129; these read ELLW…VLVI, IAAI…WGYY, and FALG…SILW.

It belongs to the MAPEG family.

The protein resides in the cell membrane. This is an uncharacterized protein from Synechocystis sp. (strain ATCC 27184 / PCC 6803 / Kazusa).